The sequence spans 555 residues: Glutamine--tRNA ligase (555 aa).

Positions 35–45 match the 'HIGH' region motif; it reads PEPNGYLHIGH. ATP contacts are provided by residues 36–38 and 42–48; these read EPN and HIGHAKS. Residues D68 and Y213 each contribute to the L-glutamine site. Residues T232, 262-263, and 270-272 contribute to the ATP site; these read RL and MSK. A 'KMSKS' region motif is present at residues 269–273; that stretch reads VMSKR.

It belongs to the class-I aminoacyl-tRNA synthetase family. Monomer.

The protein localises to the cytoplasm. The enzyme catalyses tRNA(Gln) + L-glutamine + ATP = L-glutaminyl-tRNA(Gln) + AMP + diphosphate. This chain is Glutamine--tRNA ligase, found in Photobacterium profundum (strain SS9).